Here is a 112-residue protein sequence, read N- to C-terminus: uncharacterized protein (112 aa).

The disordered stretch occupies residues 91–112; it reads ENQRKKGTRKRRSSEVDSKEKS. The span at 103 to 112 shows a compositional bias: basic and acidic residues; it reads SSEVDSKEKS.

This is an uncharacterized protein from Caenorhabditis elegans.